The following is a 1624-amino-acid chain: ATP-binding cassette sub-family A member 9 (1624 aa).

A helical transmembrane segment spans residues 31-51 (LLEWLFSFLLVLFLYLFFSNL). N-linked (GlcNAc...) asparagine glycans are attached at residues N120 and N195. Transmembrane regions (helical) follow at residues 221–243 (VATD…YVSV), 269–289 (SWGL…ALIV), 300–320 (FVMV…LAFL), 329–349 (FLTG…GFPA), 354–374 (LPAF…TVGM), and 398–418 (LIIA…VLTL). Residues 481-716 (IRIKNLKKEY…WGIGYHLSLH (236 aa)) enclose the ABC transporter 1 domain. ATP is bound at residue 517-524 (GHSGAGKT). The chain crosses the membrane as a helical span at residues 864 to 884 (LWTILLLFGISFIPQLLEHLF). N949 carries an N-linked (GlcNAc...) asparagine glycan. A run of 6 helical transmembrane segments spans residues 1026–1046 (TFFW…SSIG), 1065–1085 (AYWF…LLLM), 1108–1128 (ILCS…ISFI), 1136–1156 (SGIW…ATDL), 1163–1183 (GLFF…LFIF), and 1200–1220 (EIVY…LFIL). Residues 1288 to 1521 (LRKEYAGKKK…FGKDYLLEMK (234 aa)) form the ABC transporter 2 domain. 1326-1333 (GHNGAGKS) contributes to the ATP binding site.

This sequence belongs to the ABC transporter superfamily. ABCA family. As to expression, widely expressed with higher expression in heart.

It localises to the membrane. In terms of biological role, transporter that may play a role in monocyte differentiation and lipid transport and homeostasis. The protein is ATP-binding cassette sub-family A member 9 (ABCA9) of Homo sapiens (Human).